The sequence spans 313 residues: Ribosomal protein L11 methyltransferase (313 aa).

S-adenosyl-L-methionine contacts are provided by threonine 163, glycine 184, aspartate 206, and asparagine 249.

Belongs to the methyltransferase superfamily. PrmA family.

Its subcellular location is the cytoplasm. It carries out the reaction L-lysyl-[protein] + 3 S-adenosyl-L-methionine = N(6),N(6),N(6)-trimethyl-L-lysyl-[protein] + 3 S-adenosyl-L-homocysteine + 3 H(+). Functionally, methylates ribosomal protein L11. The chain is Ribosomal protein L11 methyltransferase from Brevibacillus brevis (strain 47 / JCM 6285 / NBRC 100599).